The primary structure comprises 416 residues: Cysteate synthase (416 aa).

At Lys-104 the chain carries N6-(pyridoxal phosphate)lysine. Asn-130 contributes to the pyridoxal 5'-phosphate binding site.

Belongs to the threonine synthase family. Cysteate synthase subfamily. As to quaternary structure, homotrimer. Pyridoxal 5'-phosphate is required as a cofactor.

It carries out the reaction O-phospho-L-serine + sulfite + H(+) = L-cysteate + phosphate. It functions in the pathway cofactor biosynthesis; coenzyme M biosynthesis. Is inhibited by AP3 (DL-2-amino-3-phosphonopropionate) and, to a lesser extent, by L-aspartate or AP4 (DL-2-amino-4-phosphonobutyrate). Is also inhibited by EDTA in vitro. Its function is as follows. Specifically catalyzes the beta-elimination of phosphate from L-phosphoserine and the beta-addition of sulfite to the dehydroalanine intermediate to produce L-cysteate. Does not display threonine synthase activity like the paralog protein ThrC. The chain is Cysteate synthase from Methanosarcina acetivorans (strain ATCC 35395 / DSM 2834 / JCM 12185 / C2A).